The chain runs to 109 residues: Serine protease inhibitor (109 aa).

Positions Met-1–Ala-28 are cleaved as a signal peptide. 5 disulfide bridges follow: Cys-43/Cys-83, Cys-52/Cys-79, Cys-58/Cys-73, Cys-62/Cys-104, and Cys-85/Cys-98. In terms of domain architecture, TIL spans Cys-43–Cys-104.

Belongs to the serine protease inhibitor-like (TIL domain-containing) family. As to expression, ubiquitously expressed (at protein level), including in venom glands. Found more precisely in the epidermis, fat body, gut, muscle, and venom of worker bees.

Its subcellular location is the secreted. Functionally, dual role peptide that functions as a broad-spectrum antimicrobial peptide and antifibrinolytic toxin. Inhibits trypsin (IC(50)=375 nM), plasmin (IC(50)=2140 nM), and microbial serine proteases (subtilisin A (IC(50)=294 nM) and proteinase K (IC(50)=459 nM)). Exhibits antifibrinolytic activity by binding and inhibiting plasmin. Does not inhibit chymotrypsin, elastase or thrombin. Binds to microbial cell wall carbohydrates (LPS, mannan and N-acetyl-D-glucosamine) and shows antimicrobial activity (MIC=4.1 uM against B.thuringiensis, MIC=4.95 uM against E.coli, MIC=9.6 uM against the fungus B.bassiana). Does not show hemolytic activity. The polypeptide is Serine protease inhibitor (Bombus ignitus (Bumblebee)).